Here is a 380-residue protein sequence, read N- to C-terminus: Succinyl-diaminopimelate desuccinylase (380 aa).

Zn(2+) is bound at residue His68. Asp70 is a catalytic residue. Asp101 is a binding site for Zn(2+). The active-site Proton acceptor is the Glu135. The Zn(2+) site is built by Glu136, Glu164, and His350.

The protein belongs to the peptidase M20A family. DapE subfamily. In terms of assembly, homodimer. Zn(2+) is required as a cofactor. It depends on Co(2+) as a cofactor.

The catalysed reaction is N-succinyl-(2S,6S)-2,6-diaminopimelate + H2O = (2S,6S)-2,6-diaminopimelate + succinate. It functions in the pathway amino-acid biosynthesis; L-lysine biosynthesis via DAP pathway; LL-2,6-diaminopimelate from (S)-tetrahydrodipicolinate (succinylase route): step 3/3. Its function is as follows. Catalyzes the hydrolysis of N-succinyl-L,L-diaminopimelic acid (SDAP), forming succinate and LL-2,6-diaminopimelate (DAP), an intermediate involved in the bacterial biosynthesis of lysine and meso-diaminopimelic acid, an essential component of bacterial cell walls. This chain is Succinyl-diaminopimelate desuccinylase, found in Tolumonas auensis (strain DSM 9187 / NBRC 110442 / TA 4).